Here is a 551-residue protein sequence, read N- to C-terminus: Probable NADH-ubiquinone oxidoreductase C3A11.07, mitochondrial (551 aa).

Residues 1-37 (MLFSRSILRGMPKAGIPKSPLALSASRNLRLANSVRF) constitute a mitochondrion transit peptide. 93–123 (TLVVLGAGWGATSILRTIDTSLFNVIVVSPR) contributes to the FAD binding site. Residue 255 to 291 (VHTVVVGGGPTGMEFAGEMADFIEDDLKSWYPELADD) participates in NAD(+) binding.

Belongs to the NADH dehydrogenase family.

Its subcellular location is the mitochondrion. It carries out the reaction a quinone + NADH + H(+) = a quinol + NAD(+). The catalysed reaction is a ubiquinone + NADH + H(+) = a ubiquinol + NAD(+). Functionally, catalyzes the oxidation of NADH. This is Probable NADH-ubiquinone oxidoreductase C3A11.07, mitochondrial from Schizosaccharomyces pombe (strain 972 / ATCC 24843) (Fission yeast).